Reading from the N-terminus, the 621-residue chain is Cyclic nucleotide-gated ion channel 11 (621 aa).

At 1 to 43 (MNLQRRKFVRLDSTGVDGKLKSVRGRLKKVYGKMKTLENWRKT) the chain is on the cytoplasmic side. Residues 44–64 (VLLACVVALAIDPLFLFIPLI) traverse the membrane as a helical segment. The Extracellular segment spans residues 65–76 (DSQRFCFTFDKT). Residues 77-97 (LVAVVCVIRTFIDTFYVIHII) form a helical membrane-spanning segment. Topologically, residues 98–128 (YYLITETIAPRSQASLRGEIVVHSKATLKTR) are cytoplasmic. Residues 129–149 (LLFHFIVDIISVLPIPQVVVL) form a helical membrane-spanning segment. The Extracellular portion of the chain corresponds to 150-162 (TLIPLSASLVSER). Residues 163 to 183 (ILKWIILSQYVPRIIRMYPLY) form a helical membrane-spanning segment. The Cytoplasmic segment spans residues 184–198 (KEVTRAFGTVAESKR). Residues 199–219 (VGAALNFFLYMLHSYVCGAFW) form a helical membrane-spanning segment. At 220–329 (YLSSIERKST…QNLETSNSAG (110 aa)) the chain is on the extracellular side. Residues 330-350 (EIFFAIIICVSGLLLFAVLIG) traverse the membrane as a helical segment. Topologically, residues 351–621 (NVQKYLQSST…KLNLGAAIYA (271 aa)) are cytoplasmic. Residues 435 to 556 (LLQA…HSKQ) and Asp-506 contribute to the a nucleoside 3',5'-cyclic phosphate site. The interval 549–564 (YRRLHSKQLQHMFRFY) is calmodulin-binding. An IQ domain is found at 569-598 (QTWAACFIQAAWKRHCRRKLSKALREEEGK).

The protein belongs to the cyclic nucleotide-gated cation channel (TC 1.A.1.5) family. As to quaternary structure, homotetramer or heterotetramer.

It localises to the cell membrane. Its function is as follows. Putative cyclic nucleotide-gated ion channel. In Arabidopsis thaliana (Mouse-ear cress), this protein is Cyclic nucleotide-gated ion channel 11 (CNGC11).